A 598-amino-acid chain; its full sequence is EF-hand and coiled-coil domain-containing protein 1 (598 aa).

Residues 1 to 22 (MEPVSTGAEAGMEGAGGDPYRR) form a disordered region. The 36-residue stretch at 54-89 (GLDQYLQEVFHHLDCRGAGRLPRADFRALCAVLGLR) folds into the EF-hand domain. Disordered regions lie at residues 96–127 (AGQA…DTDE), 175–198 (RLRR…PDCE), and 326–411 (YRSE…KKTP). Residues 175–185 (RLRRPRRRRRP) show a composition bias toward basic residues. A coiled-coil region spans residues 196 to 303 (DCERVARLEE…RSLHRVRELE (108 aa)). Basic and acidic residues predominate over residues 343–359 (PGDKSNEPEDAGTRDPD). Over residues 394 to 404 (SDEEEVEEERW) the composition is skewed to acidic residues. Positions 479-533 (TSEEEAELQQKVEENEHLRLELQMVETERVRLSLLEEKLVDVLQLLQRLRDLNIS) form a coiled coil.

The sequence is that of EF-hand and coiled-coil domain-containing protein 1 (EFCC1) from Homo sapiens (Human).